Consider the following 186-residue polypeptide: Nucleoside diphosphate kinase 6 (186 aa).

Residues Lys19, Phe68, Arg96, Thr102, Arg116, and Asn126 each contribute to the ATP site. The active-site Pros-phosphohistidine intermediate is the His129.

Belongs to the NDK family. It depends on Mg(2+) as a cofactor. In terms of tissue distribution, expressed at a moderately low level in many tissues. Most abundant in kidney, prostate, ovary, intestine, and spleen.

The catalysed reaction is a 2'-deoxyribonucleoside 5'-diphosphate + ATP = a 2'-deoxyribonucleoside 5'-triphosphate + ADP. The enzyme catalyses a ribonucleoside 5'-diphosphate + ATP = a ribonucleoside 5'-triphosphate + ADP. In terms of biological role, major role in the synthesis of nucleoside triphosphates other than ATP. The ATP gamma phosphate is transferred to the NDP beta phosphate via a ping-pong mechanism, using a phosphorylated active-site intermediate. Inhibitor of p53-induced apoptosis. The protein is Nucleoside diphosphate kinase 6 (NME6) of Homo sapiens (Human).